Consider the following 848-residue polypeptide: Heat shock protein 70 homolog lhs1 (848 aa).

Positions 1-21 (MKRSVLTIILFFSCQFWHAFA) are cleaved as a signal peptide. N-linked (GlcNAc...) asparagine glycosylation is found at N134, N247, N359, N457, N462, N488, N555, N632, N678, N733, and N817. Positions 784 to 848 (KLKAKKGASS…QQEIDDSDEL (65 aa)) are disordered. 2 stretches are compositionally biased toward polar residues: residues 807–822 (TNDIEPTTALNSTSTQ) and 829–840 (ASVTQRPSSLQQ). The short motif at 845-848 (SDEL) is the Prevents secretion from ER element.

Belongs to the heat shock protein 70 family.

It localises to the endoplasmic reticulum lumen. It carries out the reaction ATP + H2O = ADP + phosphate + H(+). In terms of biological role, chaperone required for protein translocation and folding in the endoplasmic reticulum. This is Heat shock protein 70 homolog lhs1 from Schizosaccharomyces pombe (strain 972 / ATCC 24843) (Fission yeast).